Reading from the N-terminus, the 411-residue chain is Serine hydroxymethyltransferase (411 aa).

(6S)-5,6,7,8-tetrahydrofolate is bound by residues Leu-117 and 121–123 (GHL). Lys-226 carries the N6-(pyridoxal phosphate)lysine modification. Residues Glu-241 and 349-351 (SPF) contribute to the (6S)-5,6,7,8-tetrahydrofolate site.

Belongs to the SHMT family. As to quaternary structure, homodimer. Pyridoxal 5'-phosphate is required as a cofactor.

The protein resides in the cytoplasm. It catalyses the reaction (6R)-5,10-methylene-5,6,7,8-tetrahydrofolate + glycine + H2O = (6S)-5,6,7,8-tetrahydrofolate + L-serine. The protein operates within one-carbon metabolism; tetrahydrofolate interconversion. Its pathway is amino-acid biosynthesis; glycine biosynthesis; glycine from L-serine: step 1/1. In terms of biological role, catalyzes the reversible interconversion of serine and glycine with tetrahydrofolate (THF) serving as the one-carbon carrier. This reaction serves as the major source of one-carbon groups required for the biosynthesis of purines, thymidylate, methionine, and other important biomolecules. Also exhibits THF-independent aldolase activity toward beta-hydroxyamino acids, producing glycine and aldehydes, via a retro-aldol mechanism. This Macrococcus caseolyticus (strain JCSC5402) (Macrococcoides caseolyticum) protein is Serine hydroxymethyltransferase.